Consider the following 428-residue polypeptide: Histidine--tRNA ligase (428 aa).

The protein belongs to the class-II aminoacyl-tRNA synthetase family. In terms of assembly, homodimer.

Its subcellular location is the cytoplasm. The enzyme catalyses tRNA(His) + L-histidine + ATP = L-histidyl-tRNA(His) + AMP + diphosphate + H(+). This Chlamydia trachomatis serovar A (strain ATCC VR-571B / DSM 19440 / HAR-13) protein is Histidine--tRNA ligase.